Consider the following 221-residue polypeptide: Large ribosomal subunit protein uL16A (221 aa).

Belongs to the universal ribosomal protein uL16 family. Component of the large ribosomal subunit (LSU). Mature yeast ribosomes consist of a small (40S) and a large (60S) subunit. The 40S small subunit contains 1 molecule of ribosomal RNA (18S rRNA) and at least 33 different proteins. The large 60S subunit contains 3 rRNA molecules (25S, 5.8S and 5S rRNA) and at least 46 different proteins.

The protein resides in the cytoplasm. Functionally, component of the ribosome, a large ribonucleoprotein complex responsible for the synthesis of proteins in the cell. The small ribosomal subunit (SSU) binds messenger RNAs (mRNAs) and translates the encoded message by selecting cognate aminoacyl-transfer RNA (tRNA) molecules. The large subunit (LSU) contains the ribosomal catalytic site termed the peptidyl transferase center (PTC), which catalyzes the formation of peptide bonds, thereby polymerizing the amino acids delivered by tRNAs into a polypeptide chain. The nascent polypeptides leave the ribosome through a tunnel in the LSU and interact with protein factors that function in enzymatic processing, targeting, and the membrane insertion of nascent chains at the exit of the ribosomal tunnel. The sequence is that of Large ribosomal subunit protein uL16A (rpl1001) from Schizosaccharomyces pombe (strain 972 / ATCC 24843) (Fission yeast).